A 1387-amino-acid chain; its full sequence is DNA-directed RNA polymerase subunit beta'' (1387 aa).

Residues cysteine 224, cysteine 295, cysteine 302, and cysteine 305 each contribute to the Zn(2+) site. A disordered region spans residues serine 883–aspartate 903.

It belongs to the RNA polymerase beta' chain family. RpoC2 subfamily. In terms of assembly, in plastids the minimal PEP RNA polymerase catalytic core is composed of four subunits: alpha, beta, beta', and beta''. When a (nuclear-encoded) sigma factor is associated with the core the holoenzyme is formed, which can initiate transcription. Zn(2+) is required as a cofactor.

It is found in the plastid. The protein resides in the chloroplast. The enzyme catalyses RNA(n) + a ribonucleoside 5'-triphosphate = RNA(n+1) + diphosphate. DNA-dependent RNA polymerase catalyzes the transcription of DNA into RNA using the four ribonucleoside triphosphates as substrates. The chain is DNA-directed RNA polymerase subunit beta'' from Platanus occidentalis (Sycamore).